The primary structure comprises 446 residues: Phosphoglucosamine mutase (446 aa).

Residue S101 is the Phosphoserine intermediate of the active site. Mg(2+) contacts are provided by S101, D240, D242, and D244. S101 bears the Phosphoserine mark.

It belongs to the phosphohexose mutase family. Mg(2+) is required as a cofactor. Post-translationally, activated by phosphorylation.

It carries out the reaction alpha-D-glucosamine 1-phosphate = D-glucosamine 6-phosphate. Functionally, catalyzes the conversion of glucosamine-6-phosphate to glucosamine-1-phosphate. This Pseudomonas entomophila (strain L48) protein is Phosphoglucosamine mutase.